Reading from the N-terminus, the 278-residue chain is Malonyl-[acyl-carrier protein] O-methyltransferase (278 aa).

Belongs to the methyltransferase superfamily.

It catalyses the reaction malonyl-[ACP] + S-adenosyl-L-methionine = malonyl-[ACP] methyl ester + S-adenosyl-L-homocysteine. Its pathway is cofactor biosynthesis; biotin biosynthesis. Its function is as follows. Converts the free carboxyl group of a malonyl-thioester to its methyl ester by transfer of a methyl group from S-adenosyl-L-methionine (SAM). It allows to synthesize pimeloyl-ACP via the fatty acid synthetic pathway. The protein is Malonyl-[acyl-carrier protein] O-methyltransferase of Brevibacillus brevis (strain 47 / JCM 6285 / NBRC 100599).